We begin with the raw amino-acid sequence, 478 residues long: Proline--tRNA ligase (478 aa).

Belongs to the class-II aminoacyl-tRNA synthetase family. ProS type 3 subfamily. In terms of assembly, homodimer.

It localises to the cytoplasm. It catalyses the reaction tRNA(Pro) + L-proline + ATP = L-prolyl-tRNA(Pro) + AMP + diphosphate. In terms of biological role, catalyzes the attachment of proline to tRNA(Pro) in a two-step reaction: proline is first activated by ATP to form Pro-AMP and then transferred to the acceptor end of tRNA(Pro). The sequence is that of Proline--tRNA ligase from Oceanobacillus iheyensis (strain DSM 14371 / CIP 107618 / JCM 11309 / KCTC 3954 / HTE831).